Consider the following 366-residue polypeptide: Septin-1 (366 aa).

The 274-residue stretch at 22–295 (KGFDFTLMVA…EGYRARCLQS (274 aa)) folds into the Septin-type G domain. The segment at 32–39 (GESGLGKS) is G1 motif. Residues 32 to 39 (GESGLGKS), threonine 66, glycine 92, and 171 to 179 (KADALLPRE) contribute to the GTP site. The tract at residues 89-92 (DTPG) is G3 motif. Residues 170 to 173 (GKAD) form a G4 motif region. Phosphoserine is present on serine 206. GTP-binding residues include glycine 229 and arginine 244. Serine 247 is modified (phosphoserine; by AURKB). Residue threonine 250 is modified to Phosphothreonine. Residues serine 306 and serine 314 each carry the phosphoserine; by AURKB modification. The disordered stretch occupies residues 347–366 (EKMQAQMQQSQAQGEQSDVL). Residues 349–366 (MQAQMQQSQAQGEQSDVL) show a composition bias toward low complexity.

The protein belongs to the TRAFAC class TrmE-Era-EngA-EngB-Septin-like GTPase superfamily. Septin GTPase family. Septins polymerize into heterooligomeric protein complexes that form filaments, and can associate with cellular membranes, actin filaments and microtubules. GTPase activity is required for filament formation. Interacts with AURKB.

Its subcellular location is the cytoplasm. The protein resides in the cytoskeleton. It is found in the microtubule organizing center. The protein localises to the centrosome. It localises to the midbody. Its function is as follows. Filament-forming cytoskeletal GTPase. May play a role in cytokinesis (Potential). This Rattus norvegicus (Rat) protein is Septin-1.